Here is a 140-residue protein sequence, read N- to C-terminus: Fatty acid-binding protein 12 (140 aa).

A fatty acid-binding positions include arginine 107 and 127–129 (RTY).

This sequence belongs to the calycin superfamily. Fatty-acid binding protein (FABP) family. In terms of tissue distribution, expressed in a number of retinoblastoma cell lines.

Its function is as follows. May play a role in lipid transport. This is Fatty acid-binding protein 12 (FABP12) from Homo sapiens (Human).